The following is a 135-amino-acid chain: NAD(P)H-quinone oxidoreductase subunit 3 (135 aa).

The next 3 membrane-spanning stretches (helical) occupy residues 15 to 35 (LMFV…AAAV), 79 to 99 (MFAL…PWAV), and 104 to 124 (LGLL…VALA).

This sequence belongs to the complex I subunit 3 family. As to quaternary structure, NDH-1 can be composed of about 15 different subunits; different subcomplexes with different compositions have been identified which probably have different functions.

Its subcellular location is the cellular thylakoid membrane. It catalyses the reaction a plastoquinone + NADH + (n+1) H(+)(in) = a plastoquinol + NAD(+) + n H(+)(out). The enzyme catalyses a plastoquinone + NADPH + (n+1) H(+)(in) = a plastoquinol + NADP(+) + n H(+)(out). NDH-1 shuttles electrons from an unknown electron donor, via FMN and iron-sulfur (Fe-S) centers, to quinones in the respiratory and/or the photosynthetic chain. The immediate electron acceptor for the enzyme in this species is believed to be plastoquinone. Couples the redox reaction to proton translocation, and thus conserves the redox energy in a proton gradient. Cyanobacterial NDH-1 also plays a role in inorganic carbon-concentration. The chain is NAD(P)H-quinone oxidoreductase subunit 3 from Synechococcus sp. (strain CC9311).